Reading from the N-terminus, the 740-residue chain is Polyribonucleotide nucleotidyltransferase (740 aa).

Mg(2+) contacts are provided by Asp514 and Asp520. The KH domain occupies 580–639 (PRIITVKIPVDKIGEVIGPKRQMINQIQEDTGAEITIEDDGTIYIGAADGPAAEAARATI). Positions 651-723 (GERILGSVVK…SRGKLSLIPV (73 aa)) constitute an S1 motif domain.

It belongs to the polyribonucleotide nucleotidyltransferase family. As to quaternary structure, homotrimer. The cofactor is Mg(2+).

Its subcellular location is the cytoplasm. The catalysed reaction is RNA(n+1) + phosphate = RNA(n) + a ribonucleoside 5'-diphosphate. Its function is as follows. Involved in mRNA degradation. Catalyzes the phosphorolysis of single-stranded polyribonucleotides processively in the 3'- to 5'-direction. The chain is Polyribonucleotide nucleotidyltransferase from Streptomyces antibioticus.